The sequence spans 352 residues: MDELKQPPHANRGVVIVKEKNEAVESPLVSMVDYIRVSFKTHDVDRIIEEVLHLSKDFMTEKQSGFYGYVGTYELDYIKVFYSAPDDNRGVLIEMSGQGCRQFESFLECRKKTWYDFFQDCMQQGGSFTRFDLAIDDKKTYFSIPELLKKAQKGECISRFRKSDFNGSFDLSDGITGGTTIYFGSKKSEAYLCFYEKNYEQAEKYNIPLEELGDWNRYELRLKNERAQVAIDALLKTKDLTLIAMQIINNYVRFVDADENITREHWKTSLFWSDFIGDVGRLPLYVKPQKDFYQKSRNWLRNSCAPTMKMVLEADEHLGKTDLSDMIAEAELADKHKKMLDVYMADVADMVV.

Belongs to the plasmid replication initiation factor family.

Its function is as follows. Probable DNA relaxase involved in the transfer of the integrative and conjugative element ICEBs1. Required for the transfer of ICEBs1. Probably mediates conjugation of ICEBs1 by nicking at oriT on the conjugative element and facilitates the translocation of a single strand of ICEBs1 DNA through a transmembrane conjugation pore into the recipient cell. The protein is Putative DNA relaxase NicK (nicK) of Bacillus subtilis (strain 168).